Reading from the N-terminus, the 5161-residue chain is Nonribosomal peptide synthetase TES (5161 aa).

The tract at residues 37–436 is adenylation 1; it reads EEQAIARPNA…GRKDSQTKVR (400 aa). The Carrier 1 domain maps to 569–645; the sequence is QPETEKEQIL…KLTSAAIPSV (77 aa). Ser-606 bears the O-(pantetheine 4'-phosphoryl)serine mark. The interval 659-1098 is condensation 1; the sequence is GHVAQSFAQG…LLCDVELSKL (440 aa). The segment at 1122–1522 is adenylation 2; the sequence is RQQTSLCPSR…GRMDGQVKIR (401 aa). Residues 1630–1742 form a methyltransferase (M) domain 1 region; that stretch reads MNEWLDDTID…YLFKTTQQLL (113 aa). The Carrier 2 domain occupies 2068-2141; the sequence is TRAESKIQQL…QLAAVAQEHV (74 aa). Ser-2102 bears the O-(pantetheine 4'-phosphoryl)serine mark. The tract at residues 2179-2593 is condensation 2; sequence EDIYPCSPLQ…MLTQDDEQQL (415 aa). Positions 2614 to 3010 are adenylation 3; the sequence is DQAKSRPEAD…GRKDGQVKVR (397 aa). In terms of domain architecture, Carrier 3 spans 3139-3215; that stretch reads KPETKHEMAL…RLANRLVDPP (77 aa). An O-(pantetheine 4'-phosphoryl)serine modification is found at Ser-3176. The tract at residues 3232-3668 is condensation 3; the sequence is LQSFAQGRLW…VVPLMTVEAH (437 aa). Positions 3694 to 4098 are adenylation 4; sequence FRQQAAMQPS…GRIDGQVKIR (405 aa). Residues 4203–4329 are methyltransferase (M) domain 2; it reads EMKEWLEETI…KVDGVKTLFF (127 aa). The Carrier 4 domain occupies 4643 to 4725; sequence RELSTAELKV…QFSQHEGEQK (83 aa). Ser-4680 carries the O-(pantetheine 4'-phosphoryl)serine modification. The condensation 4 stretch occupies residues 4785–5093; it reads FFLNLGTRVD…HQNLNEHPEF (309 aa).

The protein belongs to the NRP synthetase family.

It participates in phytotoxin biosynthesis. Nonribosomal peptide synthetase; part of the gene cluster that mediates the biosynthesis of the phytotoxin tentoxin, an inhibitor the F1-ATPase activity of chloroplasts, resulting in chlorosis in sensitive plants. Tentoxin is a cyclic tetrapeptide that consists of four amino acid residues: glycine (Gly), alanine (Ala), leucine (Leu), and dehydrophenylalanine (DPhe). In addition, both the Ala and DPhe residues are N-methylated. The nonribosomal peptide synthetase TES assembles tentoxin from the four substrate amino acids. The adenylation domains of each of the 4 modules are responsible for the activation of Gly, Ala, Leu and DPhe, respectively. In addition, the N-methyltransferase domains in the second and fourth modules of TES could be responsible for N-methylation of Ala and DPhe residues. Finally, the condensation domain located in the termination module probably catalyzes the formation of the intramolecular macrocyclization and then the release of tentoxin. The cytochrome P450 monooxygenase TES1 is predicted to be involved in the formation of DPhe. This chain is Nonribosomal peptide synthetase TES, found in Alternaria alternata (Alternaria rot fungus).